The following is a 608-amino-acid chain: ATP-citrate synthase beta chain protein 2 (608 aa).

ATP-binding positions include 214-234 (ILRFNNIPQIKMMVVLGELGG) and 265-291 (FKSEVQFGHAGAKSGGEMESAQAKNQA). Glu-231 lines the Mg(2+) pocket. His-273 functions as the Tele-phosphohistidine intermediate in the catalytic mechanism. 292–302 (LIDAGAIVPTS) lines the CoA pocket.

It belongs to the succinate/malate CoA ligase alpha subunit family. Heterooctamer of 4 alpha and 4 beta chains. In terms of tissue distribution, expressed in trichomes, epidermal leaf cells, anther tapetal cells, stigma and in young vascular bundles of expanding leaves, cotyledons, roots, pedicel of flowers and siliques.

The protein localises to the cytoplasm. The protein resides in the cytosol. The catalysed reaction is oxaloacetate + acetyl-CoA + ADP + phosphate = citrate + ATP + CoA. Functionally, ATP citrate-lyase is the primary enzyme responsible for the synthesis of cytosolic acetyl-CoA, used for the elongation of fatty acids and biosynthesis of isoprenoids, flavonoids and malonated derivatives. May supply substrate to the cytosolic acetyl-CoA carboxylase, which generates the malonyl-CoA used for the synthesis of a multitude of compounds, including very long chain fatty acids and flavonoids. Required for normal growth and development and elongation of C18 fatty acids to C20 to C24 fatty acids in seeds. n contrast to all known animal ACL enzymes having a homomeric structure, plant ACLs are composed of alpha and beta chains. The protein is ATP-citrate synthase beta chain protein 2 of Arabidopsis thaliana (Mouse-ear cress).